A 674-amino-acid chain; its full sequence is Translation factor GUF1, mitochondrial (674 aa).

The transit peptide at 1–48 (MRGCLQPARWLTTATLRRPLLSCPRQLPTRYNPFPRPFHHAPVLQARQ) directs the protein to the mitochondrion. In terms of domain architecture, tr-type G spans 66–246 (ERYRNFCIVA…AIIESIPALL (181 aa)). GTP-binding positions include 75 to 82 (AHVDHGKS), 139 to 143 (DTPGH), and 193 to 196 (NKVD).

Belongs to the TRAFAC class translation factor GTPase superfamily. Classic translation factor GTPase family. LepA subfamily.

It localises to the mitochondrion inner membrane. The catalysed reaction is GTP + H2O = GDP + phosphate + H(+). Promotes mitochondrial protein synthesis. May act as a fidelity factor of the translation reaction, by catalyzing a one-codon backward translocation of tRNAs on improperly translocated ribosomes. Binds to mitochondrial ribosomes in a GTP-dependent manner. This chain is Translation factor GUF1, mitochondrial, found in Arthroderma otae (strain ATCC MYA-4605 / CBS 113480) (Microsporum canis).